The chain runs to 35 residues: Kappa-theraphotoxin-Tb1a (35 aa).

Disulfide bonds link C3-C18, C10-C23, and C17-C30.

Belongs to the neurotoxin 10 (Hwtx-1) family. 59 (Tltx) subfamily. Monomer. Expressed by the venom gland.

It localises to the secreted. Functionally, blocks Kv4.2/KCND2 voltage-gated potassium channels (IC(50) is 193.0 nM) by shifting the voltage-dependence of channel activation to more depolarized potentials. The toxin is thought to bind to the S3-S4 linker region of the voltage sensor domain. This Theraphosa blondi (Goliath birdeating spider) protein is Kappa-theraphotoxin-Tb1a.